Here is a 734-residue protein sequence, read N- to C-terminus: MNSPQRLSTYWVTCADGLETLLQQELQGLGIEQTERFAGRLIFQGSLEQAYRVCMWSRLASRVLKPIHTFELERTHDARDVAEELYEGALSFDWSLIFAPQSTFAIRLHVEREIKVNSQFATLRVKDGVVDSFMEAVGRRPSIDTKQPEITLFVLAGKTEHTYCLDLSGDSLHKRGYRHYMTDAPIKENLAAAILQKAKLTELKPDLILDPMCGSGTFIIESLMIFTDRAPGLVRRFGFNGWHGHDRELWLELKAEAAERHEIALQNTLPKFYAFDADWEAVKATRQNIIAAGFEKLLDQIQIEERTLADWPSFENTYNTAFVVTNPPYGERLGDKASNRALYLGLSALLQQYFPKQHAAVIAAQIEQADVLAFSEPETLRLMNGKLPIYIRLGQVKPVANSQPFLANWHADPVEIEGAQDFANRLQKNMSALKKWAVKDQVFCLRLYDADLPDFNVAVDLYGDRLHVQEYAPPKTIDPEKAKKRFNLALAAIRAVTGLPREAIFIKTRARQEGKNQYTKQSTASKRFIVQEGQAKILVNLTDYLDTGLFLDHRQIRLRIAQEARGKHFLNLFSYTSTASLHAALGGAASTTSVDLSNTYINWSKENFVLNGLTVDHADEQHMFFASDCFEWLKEGHEQYDLIFIDPPTFSNSKKFYGTFDIQRDHVSLLKRAMNRLSAEGTLYFSNNYRGFELDEEIDAIFYAQEITNDTIGPDFKRNQKIHRAWKIQHPHMN.

In terms of domain architecture, THUMP spans 49 to 167 (QAYRVCMWSR…KTEHTYCLDL (119 aa)).

The protein belongs to the methyltransferase superfamily. RlmKL family.

The protein localises to the cytoplasm. It carries out the reaction guanosine(2445) in 23S rRNA + S-adenosyl-L-methionine = N(2)-methylguanosine(2445) in 23S rRNA + S-adenosyl-L-homocysteine + H(+). The enzyme catalyses guanosine(2069) in 23S rRNA + S-adenosyl-L-methionine = N(2)-methylguanosine(2069) in 23S rRNA + S-adenosyl-L-homocysteine + H(+). Specifically methylates the guanine in position 2445 (m2G2445) and the guanine in position 2069 (m7G2069) of 23S rRNA. The polypeptide is Ribosomal RNA large subunit methyltransferase K/L (Acinetobacter baylyi (strain ATCC 33305 / BD413 / ADP1)).